The chain runs to 193 residues: Probable nicotinate-nucleotide adenylyltransferase (193 aa).

It belongs to the NadD family.

It carries out the reaction nicotinate beta-D-ribonucleotide + ATP + H(+) = deamido-NAD(+) + diphosphate. It participates in cofactor biosynthesis; NAD(+) biosynthesis; deamido-NAD(+) from nicotinate D-ribonucleotide: step 1/1. In terms of biological role, catalyzes the reversible adenylation of nicotinate mononucleotide (NaMN) to nicotinic acid adenine dinucleotide (NaAD). The protein is Probable nicotinate-nucleotide adenylyltransferase of Flavobacterium psychrophilum (strain ATCC 49511 / DSM 21280 / CIP 103535 / JIP02/86).